Reading from the N-terminus, the 321-residue chain is Peroxidase 4 (321 aa).

The N-terminal stretch at M1–A25 is a signal peptide. Q26 carries the pyrrolidone carboxylic acid modification. 4 disulfide bridges follow: C36–C116, C69–C74, C122–C317, and C201–C226. The active-site Proton acceptor is the H67. Residues D68, V71, G73, D75, and S77 each contribute to the Ca(2+) site. Substrate is bound at residue P164. H194 serves as a coordination point for heme b. Residue T195 participates in Ca(2+) binding. The N-linked (GlcNAc...) asparagine glycan is linked to N210. D241, T244, and D249 together coordinate Ca(2+).

The protein belongs to the peroxidase family. Classical plant (class III) peroxidase subfamily. Heme b is required as a cofactor. It depends on Ca(2+) as a cofactor.

Its subcellular location is the secreted. It catalyses the reaction 2 a phenolic donor + H2O2 = 2 a phenolic radical donor + 2 H2O. In terms of biological role, removal of H(2)O(2), oxidation of toxic reductants, biosynthesis and degradation of lignin, suberization, auxin catabolism, response to environmental stresses such as wounding, pathogen attack and oxidative stress. These functions might be dependent on each isozyme/isoform in each plant tissue. The protein is Peroxidase 4 of Vitis vinifera (Grape).